A 115-amino-acid chain; its full sequence is ATP synthase subunit g, mitochondrial (115 aa).

Methionine 1 is subject to N-acetylmethionine. Residues serine 3 and serine 62 each carry the phosphoserine modification.

It belongs to the ATPase g subunit family. In terms of assembly, F-type ATPases have 2 components, CF(1) - the catalytic core - and CF(0) - the membrane proton channel. In yeast, the dimeric form of ATP synthase consists of 17 polypeptides: alpha, beta, gamma, delta, epsilon, 4 (B), 5 (OSCP), 6 (A), 8, 9 (C), d, E (Tim11), f, g, h, i/j and k. Post-translationally, phosphorylation on Ser-62 impairs ATP synthase dimerization.

It is found in the mitochondrion membrane. In terms of biological role, mitochondrial membrane ATP synthase (F(1)F(0) ATP synthase or Complex V) produces ATP from ADP in the presence of a proton gradient across the membrane which is generated by electron transport complexes of the respiratory chain. F-type ATPases consist of two structural domains, F(1) - containing the extramembraneous catalytic core, and F(0) - containing the membrane proton channel, linked together by a central stalk and a peripheral stalk. During catalysis, ATP synthesis in the catalytic domain of F(1) is coupled via a rotary mechanism of the central stalk subunits to proton translocation. Part of the complex F(0) domain. Minor subunit located with subunit a in the membrane. The protein is ATP synthase subunit g, mitochondrial (ATP20) of Saccharomyces cerevisiae (strain ATCC 204508 / S288c) (Baker's yeast).